We begin with the raw amino-acid sequence, 174 residues long: Amino-acid acetyltransferase (174 aa).

In terms of domain architecture, N-acetyltransferase spans Pro10–Asp148.

The protein belongs to the acetyltransferase family. Homodimer and homotetramer.

The enzyme catalyses L-glutamate + acetyl-CoA = N-acetyl-L-glutamate + CoA + H(+). Its pathway is amino-acid biosynthesis; L-arginine biosynthesis; N(2)-acetyl-L-ornithine from L-glutamate: step 1/4. With respect to regulation, inhibited by L-arginine. Catalyzes the conversion of L-glutamate to alpha-N-acetyl-L-glutamate. L-glutamine is a significantly better substrate compared to L-glutamate. The protein is Amino-acid acetyltransferase (argA) of Mycobacterium tuberculosis (strain ATCC 25618 / H37Rv).